The sequence spans 230 residues: Cytidylate kinase (230 aa).

Position 13 to 21 (13 to 21 (GPAGTGKSS)) interacts with ATP.

This sequence belongs to the cytidylate kinase family. Type 1 subfamily.

It is found in the cytoplasm. It catalyses the reaction CMP + ATP = CDP + ADP. It carries out the reaction dCMP + ATP = dCDP + ADP. The sequence is that of Cytidylate kinase from Mycobacterium tuberculosis (strain ATCC 25177 / H37Ra).